The sequence spans 256 residues: Deoxyribose-phosphate aldolase (256 aa).

D102 (proton donor/acceptor) is an active-site residue. K165 serves as the catalytic Schiff-base intermediate with acetaldehyde. The active-site Proton donor/acceptor is K197.

It belongs to the DeoC/FbaB aldolase family. DeoC type 2 subfamily.

It is found in the cytoplasm. It catalyses the reaction 2-deoxy-D-ribose 5-phosphate = D-glyceraldehyde 3-phosphate + acetaldehyde. The protein operates within carbohydrate degradation; 2-deoxy-D-ribose 1-phosphate degradation; D-glyceraldehyde 3-phosphate and acetaldehyde from 2-deoxy-alpha-D-ribose 1-phosphate: step 2/2. Its function is as follows. Catalyzes a reversible aldol reaction between acetaldehyde and D-glyceraldehyde 3-phosphate to generate 2-deoxy-D-ribose 5-phosphate. In Shewanella baltica (strain OS155 / ATCC BAA-1091), this protein is Deoxyribose-phosphate aldolase.